Here is a 56-residue protein sequence, read N- to C-terminus: Ovomucoid (56 aa).

The region spanning 6–56 (VDCSEYPKPDCTLEYRPLCGSDNKTYASKCNFCNAVVESNGTLTLSHFGKC) is the Kazal-like domain. 3 cysteine pairs are disulfide-bonded: Cys-8-Cys-38, Cys-16-Cys-35, and Cys-24-Cys-56. An N-linked (GlcNAc...) asparagine glycan is attached at Asn-45.

It is found in the secreted. In Callipepla squamata pallida (Blue scaled quail), this protein is Ovomucoid.